The sequence spans 202 residues: Superoxide dismutase [Cu-Zn], chloroplastic (202 aa).

Residues 1-48 (MASQTLVSPSPLSSHSLLRTSFSGVSVKLAPQFSTLATSNFKPLTVVA) constitute a chloroplast transit peptide. 3 residues coordinate Cu cation: His-94, His-96, and His-111. The cysteines at positions 105 and 194 are disulfide-linked. Zn(2+)-binding residues include His-111, His-119, His-128, and Asp-131. His-168 contributes to the Cu cation binding site.

Belongs to the Cu-Zn superoxide dismutase family. In terms of assembly, homotetramer. Cu cation serves as cofactor. Requires Zn(2+) as cofactor.

Its subcellular location is the plastid. It localises to the chloroplast. It carries out the reaction 2 superoxide + 2 H(+) = H2O2 + O2. In terms of biological role, destroys radicals which are normally produced within the cells and which are toxic to biological systems. The sequence is that of Superoxide dismutase [Cu-Zn], chloroplastic (SODCP) from Pisum sativum (Garden pea).